The sequence spans 3595 residues: Replicase polyprotein 1ab (3595 aa).

Residues 3 to 23 (CECPRSNLVVMCSGAFCCVLC) form a C4-type; atypical zinc finger. The Peptidase C31 domain maps to 56–164 (SGLEGRYCAL…PTTIPFNTTG (109 aa)). Active-site for Nsp1-alpha papain-like cysteine proteinase activity residues include cysteine 63 and histidine 130. The region spanning 239–350 (LSFEHGRCWL…LKLPGKTYFG (112 aa)) is the Peptidase C32 domain. Residues cysteine 246 and histidine 309 each act as for Nsp1-beta papain-like cysteine proteinase activity in the active site. Residues cysteine 378 and histidine 430 each act as for Nsp2 cysteine proteinase activity in the active site. Positions 482–527 (RRGGGKKSGQSSGVRAPGRTTPDLAGDWGKAVDDQEKTASKVTTDK) are disordered. The span at 511 to 520 (KAVDDQEKTA) shows a compositional bias: basic and acidic residues. Positions 633–736 (TFIPPPDGGC…HGWCSSLLSE (104 aa)) constitute a Peptidase C33 domain. Residues 808–862 (QVRTVDPSQPAAPLPPVPRPRKRKAAAQQVSKVPSEQDPSLAHDPPEKPDSVRPP) form a disordered region. Over residues 851–860 (DPPEKPDSVR) the composition is skewed to basic and acidic residues. 7 helical membrane passes run 922 to 942 (MFFLFLGSPLFILCAVLAGVI), 951 to 971 (ILCCCLVVVYICTLFADAISS), 1019 to 1039 (VALFPLHLLLLMVDVLLVIGV), 1239 to 1259 (IFRTALAAAWVLFFVCAGYWV), 1316 to 1336 (PYIVLAACLVYLASVYVPGII), 1345 to 1365 (ALLPAGPAISALRTLVMIIAA), and 1381 to 1401 (AFVDFTSVVVVLTALLVGWIL). An HD1 region spans residues 922 to 1039 (MFFLFLGSPL…MVDVLLVIGV (118 aa)). Positions 1239 to 1399 (IFRTALAAAW…VVLTALLVGW (161 aa)) are HD2. Residues 1464–1664 (GLLREKTRAS…RLLESSINLE (201 aa)) enclose the Peptidase S32 domain. Active-site charge relay system; for 3C-like serine proteinase activity residues include histidine 1502, aspartate 1527, and serine 1580. Helical transmembrane passes span 1673 to 1693 (IIVAVVLWKYAVDPLSIPFVV), 1711 to 1731 (YNYSLFCLAAFSPLASRIFFI), 1744 to 1764 (ALICHACFAGIAVLNDFIILG), and 1784 to 1804 (AIAIAVIGALVCVAACCLELF). The interval 1687–1804 (LSIPFVVAFF…CVAACCLELF (118 aa)) is HD3. The region spanning 2083 to 2253 (DMNRLRAIIS…YPYKLHPVRG (171 aa)) is the NiRAN domain. The RdRp catalytic domain occupies 2491 to 2625 (GRCLETDLAS…LNESDDLPNF (135 aa)). The 67-residue stretch at 2746–2812 (GKEVQVCSIC…IPILKDRTKF (67 aa)) folds into the AV ZBD domain. Zn(2+) contacts are provided by cysteine 2752, cysteine 2755, cysteine 2765, cysteine 2770, cysteine 2773, histidine 2777, histidine 2779, cysteine 2782, cysteine 2789, histidine 2791, cysteine 2798, and cysteine 2801. The (+)RNA virus helicase ATP-binding domain occupies 2862 to 3022 (DLPDGKYSMK…VFELMKKNAL (161 aa)). 2897–2904 (GPPGSGKT) contacts ATP. A (+)RNA virus helicase C-terminal domain is found at 3023–3157 (HAIYRFGQNI…DGKARVMLSD (135 aa)). Residues 3196 to 3292 (SGSLSPLPRV…LTKFLDGRAV (97 aa)) form the AV-Nsp11N/CoV-Nsp15M domain. Residues 3294-3416 (MEDSVYSTGR…MVWRDQTMYF (123 aa)) form the NendoU domain. Active-site residues include histidine 3325, histidine 3340, and lysine 3369.

The protein belongs to the arteriviridae polyprotein family. Post-translationally, specific enzymatic cleavages in vivo by its own proteases yield mature proteins. There are two alternative pathways for processing. Either nsp4-5 is cleaved, which represents the major pathway or the nsp5-6 and nsp6-7 are processed, which represents the minor pathway. The major pathway occurs when nsp2 acts as a cofactor for nsp4.

It is found in the host membrane. Its subcellular location is the host cytoplasm. It localises to the host perinuclear region. It catalyses the reaction RNA(n) + a ribonucleoside 5'-triphosphate = RNA(n+1) + diphosphate. It carries out the reaction ATP + H2O = ADP + phosphate + H(+). The enzyme catalyses uridylyl-uridylyl-ribonucleotide-RNA = a 3'-end uridylyl-2',3'-cyclophospho-uridine-RNA + a 5'-end dephospho-ribonucleoside-RNA. The replicase polyprotein 1ab is a multifunctional protein: it contains the activities necessary for the transcription of negative stranded RNA, leader RNA, subgenomic mRNAs and progeny virion RNA as well as proteinases responsible for the cleavage of the polyprotein into functional products. In terms of biological role, the Nsp1 chain is essential for viral subgenomic mRNA synthesis. Its function is as follows. The 3C-like serine proteinase chain is responsible for the majority of cleavages as it cleaves the C-terminus of the polyprotein. Functionally, plays a role in viral transcription/replication and prevents the simultaneous activation of host cell dsRNA sensors, such as MDA5/IFIH1, OAS, and PKR. Acts by degrading the 5'-polyuridines generated during replication of the poly(A) region of viral genomic and subgenomic RNAs. Catalyzes a two-step reaction in which a 2'3'-cyclic phosphate (2'3'-cP) is first generated by 2'-O transesterification, which is then hydrolyzed to a 3'-phosphate (3'-P). If not degraded, poly(U) RNA would hybridize with poly(A) RNA tails and activate host dsRNA sensors. The helicase chain, which contains a zinc finger structure, displays RNA and DNA duplex-unwinding activities with 5' to 3' polarity. This is Replicase polyprotein 1ab (rep) from Simian hemorrhagic fever virus (SHFV).